The sequence spans 886 residues: Cadherin-1 (886 aa).

Positions 1–23 are cleaved as a signal peptide; that stretch reads MGARCRSFSALLLLLQVSSWLCQ. Positions 24–158 are excised as a propeptide; it reads QPESESDSCR…FHQGLRRQKR (135 aa). Topologically, residues 24–713 are extracellular; that stretch reads QPESESDSCR…SLEAGLQVPA (690 aa). Cadherin domains lie at 159–266, 267–379, 380–490, 491–597, and 598–701; these read DWVI…RPEF, IQEV…APIF, NPST…APIF, VPAE…DNAP, and IPEP…NCMK. Asp261 contacts Ca(2+). O-linked (Man...) serine glycans are attached at residues Ser284 and Ser289. Asp292 contributes to the Ca(2+) binding site. O-linked (Man...) threonine glycosylation is found at Thr362, Thr474, Thr476, and Thr513. Asn562 carries N-linked (GlcNAc...) asparagine glycosylation. 3 O-linked (Man...) threonine glycosylation sites follow: Thr580, Thr582, and Thr584. The N-linked (GlcNAc...) asparagine glycan is linked to Asn641. A helical membrane pass occupies residues 714 to 734; the sequence is ILGILGGILALLILILLLLLF. Residues 735-886 are Cytoplasmic-facing; that stretch reads LRRRTVVKEP…ADMYGGGEED (152 aa). The tract at residues 751–771 is disordered; the sequence is DTRDNVYYYDEEGGGEEDQDF. A phosphotyrosine; by SRC mark is found at Tyr757, Tyr758, and Tyr759. A compositionally biased stretch (acidic residues) spans 759–771; it reads YDEEGGGEEDQDF. The tract at residues 762 to 773 is required for binding CTNND1 and PSEN1; that stretch reads EGGGEEDQDFDL. Phosphoserine is present on residues Ser774, Ser797, Ser842, Ser844, and Ser850. The required for binding alpha, beta and stretch occupies residues 815 to 886; that stretch reads IDENLKAADS…ADMYGGGEED (72 aa).

In terms of assembly, homodimer; disulfide-linked. Component of an E-cadherin/ catenin adhesion complex composed of at least E-cadherin/CDH1, beta-catenin/CTNNB1 or gamma-catenin/JUP, and potentially alpha-catenin/CTNNA1; the complex is located to adherens junctions. Found in a complex composed of CDH1, RAP1A and PKP3; PKP3 acts as a scaffold protein within the complex, the complex is required for CDH1 localization to mature desmosome cell junctions. Interacts with the TRPV4 and CTNNB1 complex. Interacts with CTNND1. The stable association of CTNNA1 is controversial as CTNNA1 was shown not to bind to F-actin when assembled in the complex. Alternatively, the CTNNA1-containing complex may be linked to F-actin by other proteins such as LIMA1. Interaction with PSEN1, cleaves CDH1 resulting in the disassociation of cadherin-based adherens junctions (CAJs). Interacts with AJAP1 and DLGAP5. Interacts with TBC1D2. Interacts with LIMA1. Interacts with CAV1. Interacts with PIP5K1C. Interacts with DDR1; this stabilizes CDH1 at the cell surface and inhibits its internalization. Interacts with RAPGEF2. Interacts with RAB8B. Interacts with KLRG1. Forms a ternary complex composed of ADAM10, CADH1 and EPHA4; within the complex, CADH1 is cleaved by ADAM10 which disrupts adherens junctions. Interacts with SPEF1. Interacts with CTNNB1 and PKP2. Interacts with AMOTL2; the interaction may facilitate binding of radial actin fibers to cell junction complexes. Interacts with DSG3; the interaction is required for CDH1 localization to developing adherens junctions. In terms of processing, during apoptosis or with calcium influx, cleaved by a membrane-bound metalloproteinase (ADAM10), PS1/gamma-secretase and caspase-3. Processing by the metalloproteinase, induced by calcium influx, causes disruption of cell-cell adhesion and the subsequent release of beta-catenin into the cytoplasm. The residual membrane-tethered cleavage product is rapidly degraded via an intracellular proteolytic pathway. Cleavage by caspase-3 releases the cytoplasmic tail resulting in disintegration of the actin microfilament system. The gamma-secretase-mediated cleavage promotes disassembly of adherens junctions. During development of the cochlear organ of Corti, cleavage by ADAM10 at adherens junctions promotes pillar cell separation. Post-translationally, N-glycosylation at Asn-641 is essential for expression, folding and trafficking. Addition of bisecting N-acetylglucosamine by MGAT3 modulates its cell membrane location. Ubiquitinated by a SCF complex containing SKP2, which requires prior phosphorylation by CK1/CSNK1A1. Ubiquitinated by CBLL1/HAKAI, requires prior phosphorylation at Tyr-758. In terms of processing, O-glycosylated. O-manosylated by TMTC1, TMTC2, TMTC3 or TMTC4. Ser-289 and Thr-513 are O-manosylated by TMTC2 or TMTC4 but not TMTC1 or TMTC3.

It localises to the cell junction. Its subcellular location is the adherens junction. The protein resides in the cell membrane. The protein localises to the endosome. It is found in the golgi apparatus. It localises to the trans-Golgi network. Its subcellular location is the cytoplasm. The protein resides in the desmosome. In terms of biological role, cadherins are calcium-dependent cell adhesion proteins. They preferentially interact with themselves in a homophilic manner in connecting cells; cadherins may thus contribute to the sorting of heterogeneous cell types. CDH1 is involved in mechanisms regulating cell-cell adhesions, mobility and proliferation of epithelial cells. Promotes organization of radial actin fiber structure and cellular response to contractile forces, via its interaction with AMOTL2 which facilitates anchoring of radial actin fibers to CDH1 junction complexes at the cell membrane. Plays a role in the early stages of desmosome cell-cell junction formation via facilitating the recruitment of DSG2 and DSP to desmosome plaques. Has a potent invasive suppressor role. It is a ligand for integrin alpha-E/beta-7. Its function is as follows. E-Cad/CTF2 promotes non-amyloidogenic degradation of Abeta precursors. Has a strong inhibitory effect on APP C99 and C83 production. This Rattus norvegicus (Rat) protein is Cadherin-1 (Cdh1).